The sequence spans 531 residues: uncharacterized protein (531 aa).

Positions Met-1–Ala-28 are cleaved as a signal peptide. SLH domains are found at residues Glu-29–Lys-85, Gln-86–Leu-149, and Pro-150–Met-210. The MurNAc-LAA domain maps to Ile-335 to Leu-517.

It in the C-terminal section; belongs to the N-acetylmuramoyl-L-alanine amidase 3 family.

The protein resides in the secreted. The protein localises to the cell wall. It is found in the S-layer. This is an uncharacterized protein from Bacillus anthracis.